The primary structure comprises 91 residues: C-C motif chemokine 5 (91 aa).

The first 23 residues, 1-23, serve as a signal peptide directing secretion; the sequence is MKVFAAALAVILATATFCTPASA. 2 cysteine pairs are disulfide-bonded: Cys33–Cys57 and Cys34–Cys73.

This sequence belongs to the intercrine beta (chemokine CC) family.

It localises to the secreted. In terms of biological role, chemoattractant for blood monocytes, memory T-helper cells and eosinophils. Causes the release of histamine from basophils and activates eosinophils. May activate several chemokine receptors including CCR1, CCR3, CCR4 and CCR5. May also be an agonist of the G protein-coupled receptor GPR75. Together with GPR75, may play a role in neuron survival through activation of a downstream signaling pathway involving the PI3, Akt and MAP kinases. By activating GPR75 may also play a role in insulin secretion by islet cells. The polypeptide is C-C motif chemokine 5 (CCL5) (Equus caballus (Horse)).